The primary structure comprises 546 residues: Probable protein kinase UbiB (546 aa).

The region spanning 124-502 is the Protein kinase domain; the sequence is DFEIKPLASA…HVRQGQSRYF (379 aa). ATP contacts are provided by residues 130 to 138 and Lys153; that span reads LASASIAQV. Asp288 functions as the Proton acceptor in the catalytic mechanism. The next 2 helical transmembrane spans lie at 501 to 521 and 522 to 542; these read YFLGIGATLVLSGTFLLVSRP and EWGLMPGWLMAGGLIAWFVGW.

This sequence belongs to the ABC1 family. UbiB subfamily.

The protein resides in the cell inner membrane. Its pathway is cofactor biosynthesis; ubiquinone biosynthesis [regulation]. In terms of biological role, is probably a protein kinase regulator of UbiI activity which is involved in aerobic coenzyme Q (ubiquinone) biosynthesis. In Escherichia coli O45:K1 (strain S88 / ExPEC), this protein is Probable protein kinase UbiB.